A 49-amino-acid polypeptide reads, in one-letter code: Large ribosomal subunit protein bL34 (49 aa).

It belongs to the bacterial ribosomal protein bL34 family.

The protein is Large ribosomal subunit protein bL34 of Sorangium cellulosum (strain So ce56) (Polyangium cellulosum (strain So ce56)).